The sequence spans 674 residues: UvrABC system protein C (674 aa).

Residues 64–142 (NGPGVYRMLN…IKRLRPRFNV (79 aa)) enclose the GIY-YIG domain. Residues 252 to 287 (QAVKATIASAMAEASENLDFERAALYRDRLAALSHV) enclose the UVR domain.

The protein belongs to the UvrC family. In terms of assembly, interacts with UvrB in an incision complex.

It is found in the cytoplasm. Functionally, the UvrABC repair system catalyzes the recognition and processing of DNA lesions. UvrC both incises the 5' and 3' sides of the lesion. The N-terminal half is responsible for the 3' incision and the C-terminal half is responsible for the 5' incision. The sequence is that of UvrABC system protein C from Rhizobium meliloti (strain 1021) (Ensifer meliloti).